Here is a 76-residue protein sequence, read N- to C-terminus: NADH dehydrogenase [ubiquinone] 1 subunit C1, mitochondrial (76 aa).

The N-terminal 27 residues, 1–27 (MAPSVVLRSFSRLLAPARLPSCSSTRS), are a transit peptide targeting the mitochondrion. Residues 40-59 (NWLAVGLSVGASVFMWIYLI) form a helical membrane-spanning segment.

This sequence belongs to the complex I NDUFC1 subunit family. As to quaternary structure, complex I is composed of 45 different subunits.

Its subcellular location is the mitochondrion inner membrane. Its function is as follows. Accessory subunit of the mitochondrial membrane respiratory chain NADH dehydrogenase (Complex I), that is believed not to be involved in catalysis. Complex I functions in the transfer of electrons from NADH to the respiratory chain. The immediate electron acceptor for the enzyme is believed to be ubiquinone. The chain is NADH dehydrogenase [ubiquinone] 1 subunit C1, mitochondrial (Ndufc1) from Mus musculus (Mouse).